Reading from the N-terminus, the 585-residue chain is Complement component C8 alpha chain (585 aa).

The signal sequence occupies residues 1–20; sequence MLVAAFFTLFLVTCQPAVTA. A propeptide spanning residues 21–30 is cleaved from the precursor; that stretch reads QEKVNQRVNR. Residues 38–91 enclose the TSP type-1 1 domain; that stretch reads DCQLSSWSEWTDCFPCQDTKYRHRSLLQPNKFGGTICSGDIWDRASCYSPTACL. 7 disulfide bridges follow: Cys39–Cys74, Cys50–Cys84, Cys53–Cys90, Cys96–Cys108, Cys102–Cys121, Cys115–Cys130, and Cys140–Cys177. A glycan (C-linked (Man) tryptophan) is linked at Trp44. Positions 94-132 constitute an LDL-receptor class A domain; it reads AQCGQDFQCKETGRCLKRHLVCNGENDCLDGSDEDNCED. Ca(2+)-binding residues include Leu113, Asn116, Glu118, Asp120, Asp126, and Glu127. One can recognise an MACPF domain in the interval 136 to 499; it reads TESDCAQYDP…QYLMEFNACR (364 aa). 4 beta stranded membrane-spanning segments follow: residues 248–256, 259–266, 377–384, and 391–396; these read AGVTISAGL, SPLLGTVG, GGFGEIQY, and AQGILS. Cys375 and Cys400 are oxidised to a cystine. N-linked (GlcNAc...) asparagine glycosylation is present at Asn438. 4 disulfides stabilise this stretch: Cys498/Cys545, Cys500/Cys516, Cys503/Cys518, and Cys520/Cys529. The 32-residue stretch at 499–530 folds into the EGF-like domain; the sequence is RCGPCFNNGKPILEGTSCRCQCSLGLQGPACE. The TSP type-1 2 domain maps to 540–584; it reads DGHWSCWGSWSPCTAGTRERRRECNNPAPQNGGAPCPGWRVQTQA. C-linked (Man) tryptophan glycosylation is found at Trp543, Trp546, and Trp549. 2 cysteine pairs are disulfide-bonded: Cys552-Cys585 and Cys563-Cys575.

Belongs to the complement C6/C7/C8/C9 family. As to quaternary structure, heterotrimer of 3 chains: alpha (C8A), beta (C8B) and gamma (C8G); the alpha and gamma chains are disulfide bonded. Component of the membrane attack complex (MAC), composed of complement C5b, C6, C7, C8A, C8B, C8G and multiple copies of the pore-forming subunit C9.

Its subcellular location is the secreted. The protein resides in the target cell membrane. Membrane attack complex (MAC) assembly is inhibited by CD59, thereby protecting self-cells from damage during complement activation. CD59 acts by binding to the beta-haipins of C8 (C8A and C8B), forming an intermolecular beta-sheet that prevents incorporation of the multiple copies of C9 required for complete formation of the osmolytic pore. MAC assembly is also inhibited by clusterin (CLU) chaperones that inhibit polymerization of C9. Component of the membrane attack complex (MAC), a multiprotein complex activated by the complement cascade, which inserts into a target cell membrane and forms a pore, leading to target cell membrane rupture and cell lysis. The MAC is initiated by proteolytic cleavage of C5 into complement C5b in response to the classical, alternative, lectin and GZMK complement pathways. The complement pathways consist in a cascade of proteins that leads to phagocytosis and breakdown of pathogens and signaling that strengthens the adaptive immune system. C8A, together with C8B and C8G, inserts into the target membrane, but does not form pores by itself. During MAC assembly, associates with C5b, C6 and C7 to form the C5b8 intermediate complex that inserts into the target membrane and traverses the bilayer increasing membrane rigidity. The polypeptide is Complement component C8 alpha chain (C8A) (Oryctolagus cuniculus (Rabbit)).